The sequence spans 177 residues: Inner membrane-spanning protein YciB (177 aa).

5 helical membrane-spanning segments follow: residues 22-42, 50-70, 76-96, 121-141, and 149-169; these read IFIA…IHWI, ISLF…FFHN, WKIT…QFFT, FIWS…AYYF, and FKVF…SIYI.

This sequence belongs to the YciB family.

It localises to the cell inner membrane. In terms of biological role, plays a role in cell envelope biogenesis, maintenance of cell envelope integrity and membrane homeostasis. The protein is Inner membrane-spanning protein YciB of Buchnera aphidicola subsp. Acyrthosiphon pisum (strain 5A).